The following is a 337-amino-acid chain: GTPase Obg (337 aa).

One can recognise an Obg domain in the interval 1 to 158 (MFIDEVRILV…KRLRLELKLL (158 aa)). Composition is skewed to basic and acidic residues over residues 61–74 (NPEH…HGEG) and 137–146 (PTEHEPGRPG). 2 disordered regions span residues 61–83 (NPEH…AEGR) and 119–146 (GGRG…GRPG). An OBG-type G domain is found at 159–330 (ADVGLVGFPN…LKHAMADRVL (172 aa)). Residues 165–172 (GFPNAGKS), 190–194 (FTTLE), 212–215 (DIPG), 282–285 (TKMD), and 311–313 (SSA) each bind GTP. Mg(2+) is bound by residues S172 and T192.

The protein belongs to the TRAFAC class OBG-HflX-like GTPase superfamily. OBG GTPase family. As to quaternary structure, monomer. The cofactor is Mg(2+).

The protein localises to the cytoplasm. Its function is as follows. An essential GTPase which binds GTP, GDP and possibly (p)ppGpp with moderate affinity, with high nucleotide exchange rates and a fairly low GTP hydrolysis rate. Plays a role in control of the cell cycle, stress response, ribosome biogenesis and in those bacteria that undergo differentiation, in morphogenesis control. The protein is GTPase Obg of Solibacter usitatus (strain Ellin6076).